The sequence spans 262 residues: Acyl-[acyl-carrier-protein]--UDP-N-acetylglucosamine O-acyltransferase (262 aa).

Belongs to the transferase hexapeptide repeat family. LpxA subfamily. Homotrimer.

The protein localises to the cytoplasm. The catalysed reaction is a (3R)-hydroxyacyl-[ACP] + UDP-N-acetyl-alpha-D-glucosamine = a UDP-3-O-[(3R)-3-hydroxyacyl]-N-acetyl-alpha-D-glucosamine + holo-[ACP]. It participates in glycolipid biosynthesis; lipid IV(A) biosynthesis; lipid IV(A) from (3R)-3-hydroxytetradecanoyl-[acyl-carrier-protein] and UDP-N-acetyl-alpha-D-glucosamine: step 1/6. Involved in the biosynthesis of lipid A, a phosphorylated glycolipid that anchors the lipopolysaccharide to the outer membrane of the cell. The polypeptide is Acyl-[acyl-carrier-protein]--UDP-N-acetylglucosamine O-acyltransferase (Salmonella arizonae (strain ATCC BAA-731 / CDC346-86 / RSK2980)).